The chain runs to 147 residues: uncharacterized protein (147 aa).

The HTH marR-type domain maps to 1–137 (MRDNTIGSLI…LYELMTKVHK (137 aa)). Positions 53–76 (QMELAEKVTVTQGGISRMLTRLEK) form a DNA-binding region, H-T-H motif.

This is an uncharacterized protein from Bacillus cereus (strain ATCC 14579 / DSM 31 / CCUG 7414 / JCM 2152 / NBRC 15305 / NCIMB 9373 / NCTC 2599 / NRRL B-3711).